We begin with the raw amino-acid sequence, 124 residues long: Small ribosomal subunit protein bS6 (124 aa).

Positions 96–124 (ETGPSPMMKEVQREEAKKAAAAQPTEAQA) are disordered. Over residues 114–124 (AAAAQPTEAQA) the composition is skewed to low complexity.

This sequence belongs to the bacterial ribosomal protein bS6 family.

Binds together with bS18 to 16S ribosomal RNA. This is Small ribosomal subunit protein bS6 from Burkholderia vietnamiensis (strain G4 / LMG 22486) (Burkholderia cepacia (strain R1808)).